Here is a 689-residue protein sequence, read N- to C-terminus: MNQRPIQTATLSWNEQGTPVSEQFGDIYFSNEDGLEETHHVFLKGNGFPARFASHPQQSCIFAETGFGTGLNFLTLWRDFALFRQQSPNATLRRLHYISFEKYPLHVADLASAHARWPELASFAEQLRAQWPLPLAGCHRILLADGAITLDLWFGDVNTLLPTLDDSLNNQVDAWFLDGFAPAKNPDMWNEQLFNAMARMTRPGGTFSTFTAAGFVRRGLQQAGFNVTKVKGFGQKREMLTGTLPQQIHAPTAPWYHRPAATRCDDIAIIGGGIVSALTALALQRRGAVVTLYCADAQPAQGASGNRQGALYPLLNGKNDALETFFTSAFTFARRQYDQLLEQGIAFDHQWCGVSQLAFDDKSRGKIEKMLHTQWPVEFAEAMSREQLSELAGLDCAHDGIHYPAGGWLCPSDLTHALMMLAQQHGMTCHYQHELQRLKRIDNQWQLTFGQSQAAKHHATVILATGHRLPEWEQTHHLPLSAVRGQVSHIPTTPVLSQLQQVLCYDGYLTPVNPANQHHCIGASYQRGDIATDFRLTEQQENRERLLRCLPQVSWPQQVDVSDNQARCGVRCAIRDHLPMVGAVPDYAATLAQYQDLSRRIQHGGESEVNDIAVAPVWPELFMVGGLGSRGLCSAPLVAEILAAQMFGEPLPLDAKTLAALNPNRFWIRKLLKGRPVQTRSPATQESSR.

Residues 1-245 (MNQRPIQTAT…KREMLTGTLP (245 aa)) form a tRNA (mnm(5)s(2)U34)-methyltransferase region. The interval 270 to 689 (IGGGIVSALT…RSPATQESSR (420 aa)) is FAD-dependent cmnm(5)s(2)U34 oxidoreductase.

In the N-terminal section; belongs to the methyltransferase superfamily. tRNA (mnm(5)s(2)U34)-methyltransferase family. It in the C-terminal section; belongs to the DAO family. The cofactor is FAD.

The protein resides in the cytoplasm. It carries out the reaction 5-aminomethyl-2-thiouridine(34) in tRNA + S-adenosyl-L-methionine = 5-methylaminomethyl-2-thiouridine(34) in tRNA + S-adenosyl-L-homocysteine + H(+). In terms of biological role, catalyzes the last two steps in the biosynthesis of 5-methylaminomethyl-2-thiouridine (mnm(5)s(2)U) at the wobble position (U34) in tRNA. Catalyzes the FAD-dependent demodification of cmnm(5)s(2)U34 to nm(5)s(2)U34, followed by the transfer of a methyl group from S-adenosyl-L-methionine to nm(5)s(2)U34, to form mnm(5)s(2)U34. This chain is tRNA 5-methylaminomethyl-2-thiouridine biosynthesis bifunctional protein MnmC, found in Yersinia pseudotuberculosis serotype O:1b (strain IP 31758).